The chain runs to 116 residues: Putative iron-sulfur cluster insertion protein ErpA (116 aa).

Residues cysteine 44, cysteine 108, and cysteine 110 each contribute to the iron-sulfur cluster site.

Belongs to the HesB/IscA family. As to quaternary structure, homodimer. Iron-sulfur cluster serves as cofactor.

Its function is as follows. Required for insertion of 4Fe-4S clusters. This chain is Putative iron-sulfur cluster insertion protein ErpA, found in Azoarcus sp. (strain BH72).